Consider the following 156-residue polypeptide: Small ribosomal subunit protein uS7 (156 aa).

It belongs to the universal ribosomal protein uS7 family. As to quaternary structure, part of the 30S ribosomal subunit. Contacts proteins S9 and S11.

Functionally, one of the primary rRNA binding proteins, it binds directly to 16S rRNA where it nucleates assembly of the head domain of the 30S subunit. Is located at the subunit interface close to the decoding center, probably blocks exit of the E-site tRNA. The chain is Small ribosomal subunit protein uS7 from Neisseria gonorrhoeae (strain ATCC 700825 / FA 1090).